The chain runs to 88 residues: Small ribosomal subunit protein uS15c (88 aa).

It belongs to the universal ribosomal protein uS15 family. As to quaternary structure, part of the 30S ribosomal subunit.

It is found in the plastid. It localises to the chloroplast. The polypeptide is Small ribosomal subunit protein uS15c (rps15) (Lepidium virginicum (Virginia pepperweed)).